The primary structure comprises 237 residues: Riboflavin kinase (237 aa).

A disordered region spans residues 1 to 23 (MSLPNPDNRPLLIGPPTGPEAPF). 2 residues coordinate Mg(2+): Thr-46 and Asn-48. Residues 82–126 (VLYQKPPTSEPVMMDPVQQQQQQQQQQRNQQQQQEGGVGSAQQEK) are disordered. Residues 99–115 (QQQQQQQQQQRNQQQQQ) are compositionally biased toward low complexity. Catalysis depends on Glu-158, which acts as the Nucleophile.

This sequence belongs to the flavokinase family. Zn(2+) serves as cofactor. It depends on Mg(2+) as a cofactor.

The enzyme catalyses riboflavin + ATP = FMN + ADP + H(+). It participates in cofactor biosynthesis; FMN biosynthesis; FMN from riboflavin (ATP route): step 1/1. Catalyzes the phosphorylation of riboflavin (vitamin B2) to form flavin mononucleotide (FMN) coenzyme. This Neurospora crassa (strain ATCC 24698 / 74-OR23-1A / CBS 708.71 / DSM 1257 / FGSC 987) protein is Riboflavin kinase (fmn1).